The chain runs to 506 residues: D-alanine--D-alanyl carrier protein ligase (506 aa).

Residue Thr-152–Ser-153 coordinates ATP. D-alanine is bound at residue Asp-197. Asn-292–Thr-297 serves as a coordination point for ATP. Residue Val-301 coordinates D-alanine. ATP-binding positions include Asp-383, Tyr-395–Arg-398, and Lys-494. Lys-494 contributes to the D-alanine binding site.

It belongs to the ATP-dependent AMP-binding enzyme family. DltA subfamily.

The protein resides in the cytoplasm. The catalysed reaction is holo-[D-alanyl-carrier protein] + D-alanine + ATP = D-alanyl-[D-alanyl-carrier protein] + AMP + diphosphate. Its pathway is cell wall biogenesis; lipoteichoic acid biosynthesis. In terms of biological role, catalyzes the first step in the D-alanylation of lipoteichoic acid (LTA), the activation of D-alanine and its transfer onto the D-alanyl carrier protein (Dcp) DltC. In an ATP-dependent two-step reaction, forms a high energy D-alanyl-AMP intermediate, followed by transfer of the D-alanyl residue as a thiol ester to the phosphopantheinyl prosthetic group of the Dcp. D-alanylation of LTA plays an important role in modulating the properties of the cell wall in Gram-positive bacteria, influencing the net charge of the cell wall. The protein is D-alanine--D-alanyl carrier protein ligase of Lacticaseibacillus rhamnosus (Lactobacillus rhamnosus).